The chain runs to 232 residues: Ubiquinone biosynthesis O-methyltransferase (232 aa).

Residues R36, G55, D76, and L120 each coordinate S-adenosyl-L-methionine.

This sequence belongs to the methyltransferase superfamily. UbiG/COQ3 family.

The catalysed reaction is a 3-demethylubiquinol + S-adenosyl-L-methionine = a ubiquinol + S-adenosyl-L-homocysteine + H(+). The enzyme catalyses a 3-(all-trans-polyprenyl)benzene-1,2-diol + S-adenosyl-L-methionine = a 2-methoxy-6-(all-trans-polyprenyl)phenol + S-adenosyl-L-homocysteine + H(+). Its pathway is cofactor biosynthesis; ubiquinone biosynthesis. Its function is as follows. O-methyltransferase that catalyzes the 2 O-methylation steps in the ubiquinone biosynthetic pathway. This Stutzerimonas stutzeri (strain A1501) (Pseudomonas stutzeri) protein is Ubiquinone biosynthesis O-methyltransferase.